A 445-amino-acid chain; its full sequence is Phosphoglucosamine mutase (445 aa).

Catalysis depends on serine 102, which acts as the Phosphoserine intermediate. Mg(2+)-binding residues include serine 102, aspartate 241, aspartate 243, and aspartate 245. Position 102 is a phosphoserine (serine 102).

The protein belongs to the phosphohexose mutase family. The cofactor is Mg(2+). Post-translationally, activated by phosphorylation.

The catalysed reaction is alpha-D-glucosamine 1-phosphate = D-glucosamine 6-phosphate. Catalyzes the conversion of glucosamine-6-phosphate to glucosamine-1-phosphate. The sequence is that of Phosphoglucosamine mutase from Acinetobacter baumannii (strain SDF).